The following is a 1287-amino-acid chain: DNA-directed RNA polymerase subunit beta (1287 aa).

Belongs to the RNA polymerase beta chain family. In terms of assembly, the RNAP catalytic core consists of 2 alpha, 1 beta, 1 beta' and 1 omega subunit. When a sigma factor is associated with the core the holoenzyme is formed, which can initiate transcription.

The enzyme catalyses RNA(n) + a ribonucleoside 5'-triphosphate = RNA(n+1) + diphosphate. Functionally, DNA-dependent RNA polymerase catalyzes the transcription of DNA into RNA using the four ribonucleoside triphosphates as substrates. In Mycoplasma capricolum subsp. capricolum (strain California kid / ATCC 27343 / NCTC 10154), this protein is DNA-directed RNA polymerase subunit beta.